A 176-amino-acid chain; its full sequence is Pituitary adenylate cyclase-activating polypeptide (176 aa).

Positions 1 to 24 are cleaved as a signal peptide; that stretch reads MTMCSGARLALLVYGIIMHSSVYS. A propeptide spanning residues 25–79 is cleaved from the precursor; that stretch reads SPAAAGLRFPGIRPEEEAYGEDGNPLPDFDGSEPPGAGSPASAPRAAAAWYRPAG. Residues 39–68 form a disordered region; the sequence is EEEAYGEDGNPLPDFDGSEPPGAGSPASAP. The span at 56–68 shows a compositional bias: low complexity; it reads SEPPGAGSPASAP. The segment at 150–158 is important for receptor binding; sequence VKKYLAAVL. Leu-158 carries the post-translational modification Leucine amide. Lysine amide is present on Lys-169. A propeptide spanning residues 173–176 is cleaved from the precursor; sequence IAYL.

Belongs to the glucagon family.

The protein resides in the secreted. Functionally, PACAP is a neuropeptide involved in diverse array of physiological processes through activating the PACAP subfamily of class B1 G protein-coupled receptors: VIP receptor 1 (VIPR1), VIP receptor 2 (VIPR2), and PACAP type I receptor (ADCYAP1R1). Exerts neuroprotective and general cytoprotective effects due to anti-apoptotic, anti-inflammatory, and antioxidant actions. Promotes neuron projection development through the RAPGEF2/Rap1/B-Raf/ERK pathway. In chromaffin cells, induces long-lasting increase of intracellular calcium concentrations and neuroendocrine secretion. Involved in the control of glucose homeostasis, induces insulin secretion by pancreatic beta cells. PACAP exists in two bioactive forms from proteolysis of the same precursor protein, PACAP27 and PACAP38, which differ by eleven amino acid residues in the C-terminus. This chain is Pituitary adenylate cyclase-activating polypeptide, found in Homo sapiens (Human).